Consider the following 301-residue polypeptide: Transcriptional activator protein NhaR (301 aa).

The region spanning 6 to 63 is the HTH lysR-type domain; the sequence is INYNHLYYFWHVYKEGSVVGAAEALYLTPQTITGQIRALEERLQGKLFKRKGRGLEPS. The H-T-H motif DNA-binding region spans 23 to 42; that stretch reads VVGAAEALYLTPQTITGQIR.

This sequence belongs to the LysR transcriptional regulatory family.

It is found in the cytoplasm. Plays a role in the positive regulation of NhaA. This chain is Transcriptional activator protein NhaR (nhaR), found in Escherichia coli (strain K12).